The primary structure comprises 298 residues: Mimecan (298 aa).

The signal sequence occupies residues 1-20; sequence MKTLQSTLLLLLLVPLIKPA. Threonine 80 is a glycosylation site (O-linked (GalNAc...) threonine). An N-linked (GlcNAc...) (keratan sulfate) asparagine glycan is attached at asparagine 88. LRR repeat units lie at residues 112 to 131, 132 to 155, 156 to 179, 180 to 199, 200 to 225, 226 to 246, and 247 to 277; these read DAVPPLPKESAYLYARFNKI, KKLTAKDFADIPNLRRLDFTGNLI, EDIEDGTFSKLSLLEELSLAENQL, LKLPVLPPKLTLFNAKYNKI, KSRGIKANAFKKLNNLTFLYLDHNAL, ESVPLNLPESLRVIHLQFNNI, and ASITDDTFCKANDTSYIRDRIEEIRLEGNPI. Asparagine 214 carries N-linked (GlcNAc...) (keratan sulfate) asparagine glycosylation. A disulfide bond links cysteine 255 and cysteine 288. Asparagine 258 carries N-linked (GlcNAc...) (keratan sulfate) asparagine glycosylation.

The protein belongs to the small leucine-rich proteoglycan (SLRP) family. SLRP class III subfamily. O-glycosylated with a core 1 or possibly core 8 glycan. Post-translationally, contains keratan sulfate. In terms of tissue distribution, bone.

It localises to the secreted. The protein localises to the extracellular space. It is found in the extracellular matrix. In terms of biological role, induces bone formation in conjunction with TGF-beta-1 or TGF-beta-2. In Homo sapiens (Human), this protein is Mimecan (OGN).